The sequence spans 264 residues: Thymidylate synthase (264 aa).

Residue R21 coordinates dUMP. Residue H51 coordinates (6R)-5,10-methylene-5,6,7,8-tetrahydrofolate. 126–127 contacts dUMP; that stretch reads RR. Catalysis depends on C146, which acts as the Nucleophile. Residues 166–169, N177, and 207–209 each bind dUMP; these read RSAD and HIY. Position 169 (D169) interacts with (6R)-5,10-methylene-5,6,7,8-tetrahydrofolate. A263 contributes to the (6R)-5,10-methylene-5,6,7,8-tetrahydrofolate binding site.

The protein belongs to the thymidylate synthase family. Bacterial-type ThyA subfamily. As to quaternary structure, homodimer.

It is found in the cytoplasm. The enzyme catalyses dUMP + (6R)-5,10-methylene-5,6,7,8-tetrahydrofolate = 7,8-dihydrofolate + dTMP. Its pathway is pyrimidine metabolism; dTTP biosynthesis. Its function is as follows. Catalyzes the reductive methylation of 2'-deoxyuridine-5'-monophosphate (dUMP) to 2'-deoxythymidine-5'-monophosphate (dTMP) while utilizing 5,10-methylenetetrahydrofolate (mTHF) as the methyl donor and reductant in the reaction, yielding dihydrofolate (DHF) as a by-product. This enzymatic reaction provides an intracellular de novo source of dTMP, an essential precursor for DNA biosynthesis. The chain is Thymidylate synthase from Vesicomyosocius okutanii subsp. Calyptogena okutanii (strain HA).